A 217-amino-acid polypeptide reads, in one-letter code: Peptide methionine sulfoxide reductase MsrA (217 aa).

Residue Cys-54 is part of the active site.

Belongs to the MsrA Met sulfoxide reductase family.

It catalyses the reaction L-methionyl-[protein] + [thioredoxin]-disulfide + H2O = L-methionyl-(S)-S-oxide-[protein] + [thioredoxin]-dithiol. The enzyme catalyses [thioredoxin]-disulfide + L-methionine + H2O = L-methionine (S)-S-oxide + [thioredoxin]-dithiol. In terms of biological role, has an important function as a repair enzyme for proteins that have been inactivated by oxidation. Catalyzes the reversible oxidation-reduction of methionine sulfoxide in proteins to methionine. In Maricaulis maris (strain MCS10) (Caulobacter maris), this protein is Peptide methionine sulfoxide reductase MsrA.